We begin with the raw amino-acid sequence, 286 residues long: Polyamine aminopropyltransferase (286 aa).

The region spanning 5-238 (KIWHEKLHRH…GTMMFSWGTD (234 aa)) is the PABS domain. Positions 64 and 88 each coordinate spermidine. S-methyl-5'-thioadenosine-binding positions include E108 and 140-141 (NG). Residue D158 is the Proton acceptor of the active site. A spermidine-binding site is contributed by 158–161 (DSTD).

This sequence belongs to the spermidine/spermine synthase family. Homodimer or homotetramer.

It is found in the cytoplasm. The catalysed reaction is S-adenosyl 3-(methylsulfanyl)propylamine + putrescine = S-methyl-5'-thioadenosine + spermidine + H(+). It participates in amine and polyamine biosynthesis; spermidine biosynthesis; spermidine from putrescine: step 1/1. Catalyzes the irreversible transfer of a propylamine group from the amino donor S-adenosylmethioninamine (decarboxy-AdoMet) to putrescine (1,4-diaminobutane) to yield spermidine. The sequence is that of Polyamine aminopropyltransferase from Buchnera aphidicola subsp. Schizaphis graminum (strain Sg).